We begin with the raw amino-acid sequence, 300 residues long: Probable alpha-L-glutamate ligase (300 aa).

Residues 104–287 form the ATP-grasp domain; the sequence is LQLLARQGID…IAGRMIEYIE (184 aa). Residues Lys-141, 178 to 179, Asp-187, and 211 to 213 contribute to the ATP site; these read EY and RSN. Residues Asp-248, Glu-260, and Asn-262 each contribute to the Mg(2+) site. Residues Asp-248, Glu-260, and Asn-262 each contribute to the Mn(2+) site.

Belongs to the RimK family. Requires Mg(2+) as cofactor. Mn(2+) is required as a cofactor.

This chain is Probable alpha-L-glutamate ligase, found in Serratia proteamaculans (strain 568).